The chain runs to 174 residues: Gamma-crystallin A (174 aa).

Beta/gamma crystallin 'Greek key' domains lie at 2 to 40 and 41 to 83; these read GKIT…RVDS and GCWM…RSIP. Residues 84–87 form a connecting peptide region; that stretch reads YTSS. 2 Beta/gamma crystallin 'Greek key' domains span residues 88–128 and 129–171; these read HRIR…HVLE and GCWV…RRVM.

This sequence belongs to the beta/gamma-crystallin family.

Functionally, crystallins are the dominant structural components of the vertebrate eye lens. In Mus musculus (Mouse), this protein is Gamma-crystallin A (Cryga).